The chain runs to 158 residues: uncharacterized protein (158 aa).

A run of 3 helical transmembrane segments spans residues 45 to 65 (GIFF…PAVI), 76 to 96 (LAIG…IFAW), and 106 to 126 (FILV…VFAL).

This sequence to U.parvum UU007, UU041 and UU042.

Its subcellular location is the cell membrane. This is an uncharacterized protein from Ureaplasma parvum serovar 3 (strain ATCC 700970).